Consider the following 255-residue polypeptide: Small ribosomal subunit protein eS1 (255 aa).

Position 2 is an N-acetylalanine; partial (Ala2).

Belongs to the eukaryotic ribosomal protein eS1 family. Component of the small ribosomal subunit. Mature ribosomes consist of a small (40S) and a large (60S) subunit. The 40S subunit contains about 33 different proteins and 1 molecule of RNA (18S). The 60S subunit contains about 49 different proteins and 3 molecules of RNA (25S, 5.8S and 5S).

Its subcellular location is the cytoplasm. This Kluyveromyces lactis (strain ATCC 8585 / CBS 2359 / DSM 70799 / NBRC 1267 / NRRL Y-1140 / WM37) (Yeast) protein is Small ribosomal subunit protein eS1.